The following is a 671-amino-acid chain: UvrABC system protein B (671 aa).

Residues 26-414 (EGLENGLAHQ…GGDIIEQVVR (389 aa)) form the Helicase ATP-binding domain. Residue 39–46 (GVTGSGKT) coordinates ATP. The short motif at 92–115 (YYDYYQPEAYVPSSDTFIEKDASV) is the Beta-hairpin element. A Helicase C-terminal domain is found at 431 to 593 (QVDDLLSEIR…IIPQGLNKKI (163 aa)). Residues 631-666 (DQKIRELEAKMYTYAQNLEFEQAAELRDQVHQLRQQ) enclose the UVR domain.

The protein belongs to the UvrB family. As to quaternary structure, forms a heterotetramer with UvrA during the search for lesions. Interacts with UvrC in an incision complex.

It is found in the cytoplasm. Its function is as follows. The UvrABC repair system catalyzes the recognition and processing of DNA lesions. A damage recognition complex composed of 2 UvrA and 2 UvrB subunits scans DNA for abnormalities. Upon binding of the UvrA(2)B(2) complex to a putative damaged site, the DNA wraps around one UvrB monomer. DNA wrap is dependent on ATP binding by UvrB and probably causes local melting of the DNA helix, facilitating insertion of UvrB beta-hairpin between the DNA strands. Then UvrB probes one DNA strand for the presence of a lesion. If a lesion is found the UvrA subunits dissociate and the UvrB-DNA preincision complex is formed. This complex is subsequently bound by UvrC and the second UvrB is released. If no lesion is found, the DNA wraps around the other UvrB subunit that will check the other stand for damage. In Yersinia pestis, this protein is UvrABC system protein B.